The primary structure comprises 442 residues: tRNA modification GTPase MnmE (442 aa).

(6S)-5-formyl-5,6,7,8-tetrahydrofolate-binding residues include Arg22, Glu79, and Lys119. A TrmE-type G domain is found at 216–366 (GIKTCLVGAP…LLEKIKSIFA (151 aa)). Asn226 provides a ligand contact to K(+). GTP is bound by residues 226-231 (NSGKSS), 245-251 (SEIPGTT), and 270-273 (DTAG). Ser230 lines the Mg(2+) pocket. Positions 245, 247, and 250 each coordinate K(+). Position 251 (Thr251) interacts with Mg(2+). Residue Lys442 coordinates (6S)-5-formyl-5,6,7,8-tetrahydrofolate.

This sequence belongs to the TRAFAC class TrmE-Era-EngA-EngB-Septin-like GTPase superfamily. TrmE GTPase family. In terms of assembly, homodimer. Heterotetramer of two MnmE and two MnmG subunits. K(+) is required as a cofactor.

The protein localises to the cytoplasm. Its function is as follows. Exhibits a very high intrinsic GTPase hydrolysis rate. Involved in the addition of a carboxymethylaminomethyl (cmnm) group at the wobble position (U34) of certain tRNAs, forming tRNA-cmnm(5)s(2)U34. This chain is tRNA modification GTPase MnmE, found in Mesomycoplasma hyopneumoniae (strain 232) (Mycoplasma hyopneumoniae).